The following is a 151-amino-acid chain: Putative pre-16S rRNA nuclease (151 aa).

This sequence belongs to the YqgF nuclease family.

Its subcellular location is the cytoplasm. Its function is as follows. Could be a nuclease involved in processing of the 5'-end of pre-16S rRNA. The chain is Putative pre-16S rRNA nuclease from Pelagibacter ubique (strain HTCC1062).